Reading from the N-terminus, the 231-residue chain is Ion-translocating oxidoreductase complex subunit E (231 aa).

6 helical membrane passes run 18 to 38 (ALVQLLGLCPLLAVTSTATNA), 39 to 59 (LGLGLATTLVLTLTNLTISTL), 63 to 83 (TPAEIRIPIYVMIIASVVSAV), 86 to 106 (LINAYAFGLYQSLGIFIPLIV), 125 to 145 (ALSALDGFSIGMGATCAMCVL), and 182 to 202 (PFLLAMLPPGAFIGLGLMLAG).

It belongs to the NqrDE/RnfAE family. As to quaternary structure, the complex is composed of six subunits: RsxA, RsxB, RsxC, RsxD, RsxE and RsxG.

Its subcellular location is the cell inner membrane. Functionally, part of a membrane-bound complex that couples electron transfer with translocation of ions across the membrane. Required to maintain the reduced state of SoxR. The protein is Ion-translocating oxidoreductase complex subunit E of Escherichia coli (strain SMS-3-5 / SECEC).